A 1214-amino-acid chain; its full sequence is Sodium bicarbonate cotransporter 3 (1214 aa).

Residues 1–12 are compositionally biased toward basic and acidic residues; that stretch reads MERFRLEKKLPG. Disordered stretches follow at residues 1–22 and 52–93; these read MERF…VDLG and SKES…PSQR. The Extracellular portion of the chain corresponds to 1–608; sequence MERFRLEKKL…DFKDALSLQC (608 aa). Phosphoserine is present on residues serine 52, serine 55, serine 84, serine 150, leucine 165, and cysteine 168. Basic residues predominate over residues 55–72; it reads SRRRHRHRGHKHHHRRRK. A compositionally biased stretch (basic and acidic residues) spans 73 to 85; the sequence is DKESDKEDGRESP. Residue asparagine 171 is glycosylated (N-linked (GlcNAc...) asparagine). A phosphoserine mark is found at serine 233, serine 242, serine 255, arginine 258, serine 260, threonine 263, glycine 264, and alanine 267. Asparagine 269 is a glycosylation site (N-linked (GlcNAc...) asparagine). Disordered regions lie at residues 289 to 346, 362 to 408, and 552 to 572; these read SRAG…IPTV, EEQK…ENST, and FHNG…HHAG. Pro residues predominate over residues 303 to 313; the sequence is VPTPQNSPPSS. Residues 314–332 are compositionally biased toward low complexity; it reads PSISRLTSRSSQESQRQAP. The span at 379–392 shows a compositional bias: polar residues; the sequence is SPQSAPGNLDNSKS. Serine 382 carries the phosphoserine modification. N-linked (GlcNAc...) asparagine glycosylation occurs at asparagine 398. Serine 400 and serine 403 each carry phosphoserine. Asparagine 406 carries an N-linked (GlcNAc...) asparagine glycan. Residues serine 407 and serine 556 each carry the phosphoserine modification. A Phosphothreonine modification is found at threonine 557. Residues 563–572 show a composition bias toward basic and acidic residues; the sequence is TPKEAAHHAG. A helical membrane pass occupies residues 609–629; the sequence is LASILFLYCACMSPVITFGGL. Residues 630–637 lie on the Cytoplasmic side of the membrane; it reads LGEATEGR. The chain crosses the membrane as a helical span at residues 638–658; it reads ISAIESLFGASLTGIAYSLFA. The Extracellular segment spans residues 659–695; it reads GQPLTILGSTGPVLVFEKILYKFCRDYQLSYLSLRTS. A helical transmembrane segment spans residues 696–716; it reads IGLWTSFLCIVLVATDASSLV. Residues 717–725 lie on the Cytoplasmic side of the membrane; it reads CYITRFTEE. A helical membrane pass occupies residues 726-746; sequence AFAALICIIFIYEALEKLFDL. Lysine 742 is modified (phosphoserine). Over 747–817 the chain is Extracellular; sequence GETYAFNMHN…VFLGSACGHH (71 aa). The cysteines at positions 766 and 768 are disulfide-linked. Residues proline 771 and proline 774 each carry the phosphoserine modification. Asparagine 776 is a glycosylation site (N-linked (GlcNAc...) asparagine). Alanine 780 bears the Phosphoserine mark. Asparagine 786 and asparagine 791 each carry an N-linked (GlcNAc...) asparagine glycan. Cysteine 802 and cysteine 814 are disulfide-bonded. A helical membrane pass occupies residues 818 to 838; the sequence is GPYIPDVLFWCVILFFTTFFL. Residues 839–861 are Cytoplasmic-facing; that stretch reads SSFLKQFKTKRYFPTKVRSTISD. The helical transmembrane segment at 862–882 threads the bilayer; that stretch reads FAVFLTIVIMVTIDYLVGVPS. Residues 883–908 lie on the Extracellular side of the membrane; sequence PKLHVPEKFEPTHPERGWIISPLGDN. A helical transmembrane segment spans residues 909–929; it reads PWWTLLIAAIPALLCTILIFM. The Cytoplasmic portion of the chain corresponds to 930–954; that stretch reads DQQITAVIINRKEHKLKKGAGYHLD. The chain crosses the membrane as a helical span at residues 955 to 975; the sequence is LLMVGVMLGVCSVMGLPWFVA. Topologically, residues 976 to 1011 are extracellular; sequence ATVLSISHVNSLKVESECSAPGEQPKFLGIREQRVT. 3 positions are modified to phosphoserine: glutamate 1007, valine 1010, and phenylalanine 1016. Essential for cell membrane localization and transport activity regions lie at residues 1008-1131 and 1127-1214; these read QRVT…KREL and TKRE…ETSL. Residues 1012-1032 traverse the membrane as a helical segment; sequence GLMIFILMGLSVFMTSVLKFI. Over 1033 to 1034 the chain is Cytoplasmic; that stretch reads PM. A helical membrane pass occupies residues 1035–1055; sequence PVLYGVFLYMGVSSLKGIQLF. The Extracellular segment spans residues 1056–1092; it reads DRIKLFGMPAKHQPDLIYLRYVPLWKVHIFTVIQLTC. A phosphoserine mark is found at tyrosine 1073, valine 1077, serine 1102, alanine 1105, valine 1106, proline 1109, methionine 1111, and leucine 1115. The helical transmembrane segment at 1093-1113 threads the bilayer; that stretch reads LVLLWVIKVSAAAVVFPMMVL. Residues 1114-1214 lie on the Cytoplasmic side of the membrane; that stretch reads ALVFVRKLMD…KKYVDAETSL (101 aa). The tract at residues 1134 to 1136 is CA2-binding; that stretch reads LDD. Positions 1144-1162 are enriched in basic and acidic residues; sequence KKEDDKKKKEKEEAERMLQ. Positions 1144–1169 are disordered; sequence KKEDDKKKKEKEEAERMLQDDDDTVH. Position 1167 is a phosphothreonine (threonine 1167). Residues serine 1176, serine 1188, aspartate 1201, and serine 1213 each carry the phosphoserine modification. Positions 1211–1214 match the PDZ-binding motif; sequence ETSL.

The protein belongs to the anion exchanger (TC 2.A.31) family. Interacts with CFTR through NHERF1/EBP50. Interacts with USH1C. Forms a complex with ATP6V1B1 and NHERF1/EBP50. Interacts in a pH dependent-manner with CA2/carbonic anhydrase 2. Highly expressed in testis and spleen. Also expressed in retina, colon, small intestine, ovary, thymus, prostate, muscle, heart and kidney. In terms of tissue distribution, expressed in skeletal muscle and heart muscle.

It is found in the basolateral cell membrane. It localises to the apical cell membrane. The protein resides in the cell projection. The protein localises to the stereocilium. Its subcellular location is the cell membrane. It carries out the reaction hydrogencarbonate(in) + Na(+)(in) = hydrogencarbonate(out) + Na(+)(out). Transporter activity is regulated by CA2/carbonic anhydrase 2, cAMP and PKA. Insensitive to stilbene derivatives. Inhibited by 5-(N-ethyl-N-isopropyl)-amiloride (EIPA). Its function is as follows. Electroneutral sodium- and bicarbonate-dependent cotransporter with a Na(+):HCO3(-) 1:1 stoichiometry. Mediates the sodium-dependent bicarbonate transport important for pH recovery after acid load as well as for regulation of steady-state pH in the duodenum and vascular smooth muscle cells. Plays a key role in macrophage acidification, mediating bicarbonate import into the cytoplasm which is crucial for net acid extrusion and maintenance of cytoplasmic pH during phagocytosis. Provides cellular bicarbonate for de novo purine and pyrimidine synthesis and is a key mediator of de novo nucleotide synthesis downstream of mTORC1 signaling in proliferating cells. Functionally, plays a key role in macrophage acidification, mediating bicarbonate import into the cytoplasm which is crucial for net acid extrusion and maintenance of cytoplasmic pH during phagocytosis. The sequence is that of Sodium bicarbonate cotransporter 3 (SLC4A7) from Homo sapiens (Human).